The chain runs to 126 residues: UPF0538 protein C2orf76 homolog (126 aa).

The protein belongs to the UPF0538 family.

This chain is UPF0538 protein C2orf76 homolog, found in Pongo abelii (Sumatran orangutan).